The sequence spans 209 residues: 3-demethoxyubiquinol 3-hydroxylase (209 aa).

Residues 23–36 (PHATRAAPAPAQAP) are compositionally biased toward low complexity. A disordered region spans residues 23–42 (PHATRAAPAPAQAPGEMTDS). 6 residues coordinate Fe cation: glutamate 58, glutamate 88, histidine 91, glutamate 140, glutamate 172, and histidine 175.

It belongs to the COQ7 family. It depends on Fe cation as a cofactor.

The protein localises to the cell membrane. It catalyses the reaction a 5-methoxy-2-methyl-3-(all-trans-polyprenyl)benzene-1,4-diol + AH2 + O2 = a 3-demethylubiquinol + A + H2O. It participates in cofactor biosynthesis; ubiquinone biosynthesis. In terms of biological role, catalyzes the hydroxylation of 2-nonaprenyl-3-methyl-6-methoxy-1,4-benzoquinol during ubiquinone biosynthesis. The polypeptide is 3-demethoxyubiquinol 3-hydroxylase (Variovorax paradoxus (strain S110)).